Reading from the N-terminus, the 236-residue chain is 2,3,4,5-tetrahydropyridine-2,6-dicarboxylate N-acetyltransferase (236 aa).

The protein belongs to the transferase hexapeptide repeat family. DapH subfamily.

The enzyme catalyses (S)-2,3,4,5-tetrahydrodipicolinate + acetyl-CoA + H2O = L-2-acetamido-6-oxoheptanedioate + CoA. The protein operates within amino-acid biosynthesis; L-lysine biosynthesis via DAP pathway; LL-2,6-diaminopimelate from (S)-tetrahydrodipicolinate (acetylase route): step 1/3. In terms of biological role, catalyzes the transfer of an acetyl group from acetyl-CoA to tetrahydrodipicolinate. This Clostridium botulinum (strain Langeland / NCTC 10281 / Type F) protein is 2,3,4,5-tetrahydropyridine-2,6-dicarboxylate N-acetyltransferase.